The following is a 286-amino-acid chain: ATP synthase gamma chain (286 aa).

Belongs to the ATPase gamma chain family. As to quaternary structure, F-type ATPases have 2 components, CF(1) - the catalytic core - and CF(0) - the membrane proton channel. CF(1) has five subunits: alpha(3), beta(3), gamma(1), delta(1), epsilon(1). CF(0) has three main subunits: a, b and c.

It is found in the cell membrane. Its function is as follows. Produces ATP from ADP in the presence of a proton gradient across the membrane. The gamma chain is believed to be important in regulating ATPase activity and the flow of protons through the CF(0) complex. The polypeptide is ATP synthase gamma chain (Bacillus mycoides (strain KBAB4) (Bacillus weihenstephanensis)).